Reading from the N-terminus, the 315-residue chain is Methionyl-tRNA formyltransferase (315 aa).

113–116 lines the (6S)-5,6,7,8-tetrahydrofolate pocket; sequence SILP.

This sequence belongs to the Fmt family.

It carries out the reaction L-methionyl-tRNA(fMet) + (6R)-10-formyltetrahydrofolate = N-formyl-L-methionyl-tRNA(fMet) + (6S)-5,6,7,8-tetrahydrofolate + H(+). Functionally, attaches a formyl group to the free amino group of methionyl-tRNA(fMet). The formyl group appears to play a dual role in the initiator identity of N-formylmethionyl-tRNA by promoting its recognition by IF2 and preventing the misappropriation of this tRNA by the elongation apparatus. This Aliivibrio fischeri (strain ATCC 700601 / ES114) (Vibrio fischeri) protein is Methionyl-tRNA formyltransferase.